A 493-amino-acid polypeptide reads, in one-letter code: Cholesteryl ester transfer protein (493 aa).

A signal peptide spans 1 to 17; the sequence is MLAATVLTLALLGNAHA. N-linked (GlcNAc...) (complex) asparagine glycosylation is present at Asn-105. Cys-160 and Cys-201 form a disulfide bridge. Asn-257, Asn-358, and Asn-413 each carry an N-linked (GlcNAc...) asparagine glycan.

Belongs to the BPI/LBP/Plunc superfamily. BPI/LBP family. In terms of tissue distribution, expressed by the liver and secreted in plasma.

Its subcellular location is the secreted. The enzyme catalyses cholesteryl (9Z-octadecenoate)(in) = cholesteryl (9Z-octadecenoate)(out). It carries out the reaction 1,2,3-tri-(9Z-octadecenoyl)-glycerol(in) = 1,2,3-tri-(9Z-octadecenoyl)-glycerol(out). The catalysed reaction is cholesteryl (9Z,12Z)-octadecadienoate(in) = cholesteryl (9Z,12Z)-octadecadienoate(out). In terms of biological role, involved in the transfer of neutral lipids, including cholesteryl ester and triglyceride, among lipoprotein particles. Allows the net movement of cholesteryl ester from high density lipoproteins/HDL to triglyceride-rich very low density lipoproteins/VLDL, and the equimolar transport of triglyceride from VLDL to HDL. Regulates the reverse cholesterol transport, by which excess cholesterol is removed from peripheral tissues and returned to the liver for elimination. This chain is Cholesteryl ester transfer protein, found in Homo sapiens (Human).